The primary structure comprises 65 residues: Large ribosomal subunit protein bL35 (65 aa).

Over residues 1–16 (MPKMKTKSGAKKRFRV) the composition is skewed to basic residues. Residues 1 to 25 (MPKMKTKSGAKKRFRVRPGGTVKRG) are disordered.

It belongs to the bacterial ribosomal protein bL35 family.

In Herminiimonas arsenicoxydans, this protein is Large ribosomal subunit protein bL35.